The following is a 152-amino-acid chain: Snaclec coagulation factor IX/factor X-binding protein subunit A (152 aa).

The signal sequence occupies residues 1–23; sequence MGRFIFVSFGLLVVAASLSGTGA. Cystine bridges form between Cys25–Cys36, Cys53–Cys150, and Cys125–Cys142. Positions 32 to 151 constitute a C-type lectin domain; the sequence is YEGHCYKAFE…CGQRIPFVCE (120 aa). Residues Ser64, Glu66, and Glu70 each contribute to the Ca(2+) site. Glu151 lines the Ca(2+) pocket.

The protein belongs to the snaclec family. As to quaternary structure, heterodimer of subunits A and B; disulfide-linked. Expressed by the venom gland.

The protein localises to the secreted. Anticoagulant protein which binds to the gamma-carboxyglutamic acid-domain regions of factors IX (F9) and factor X (F10) in the presence of calcium with a 1 to 1 stoichiometry. The sequence is that of Snaclec coagulation factor IX/factor X-binding protein subunit A from Trimeresurus stejnegeri (Chinese green tree viper).